Consider the following 249-residue polypeptide: Bacillaene synthase decarboxylase PksI (249 aa).

Residue His230 is part of the active site.

It belongs to the enoyl-CoA hydratase/isomerase family. As to quaternary structure, homotrimer. Does not form a heterotrimeric complex with PksH.

The protein localises to the cytoplasm. It functions in the pathway antibiotic biosynthesis; bacillaene biosynthesis. Its function is as follows. Involved in some intermediate steps for the synthesis of the antibiotic polyketide bacillaene which is involved in secondary metabolism. Catalyzes the decarboxylation of the 3-methylglutaconyl group tethered to PksL to a 3-methylcrotonyl moiety. The protein is Bacillaene synthase decarboxylase PksI (pksI) of Bacillus subtilis (strain 168).